The primary structure comprises 227 residues: NADH-quinone oxidoreductase subunit C (227 aa).

It belongs to the complex I 30 kDa subunit family. In terms of assembly, NDH-1 is composed of 14 different subunits. Subunits NuoB, C, D, E, F, and G constitute the peripheral sector of the complex.

Its subcellular location is the cell inner membrane. It catalyses the reaction a quinone + NADH + 5 H(+)(in) = a quinol + NAD(+) + 4 H(+)(out). Functionally, NDH-1 shuttles electrons from NADH, via FMN and iron-sulfur (Fe-S) centers, to quinones in the respiratory chain. The immediate electron acceptor for the enzyme in this species is believed to be ubiquinone. Couples the redox reaction to proton translocation (for every two electrons transferred, four hydrogen ions are translocated across the cytoplasmic membrane), and thus conserves the redox energy in a proton gradient. The polypeptide is NADH-quinone oxidoreductase subunit C (Legionella pneumophila subsp. pneumophila (strain Philadelphia 1 / ATCC 33152 / DSM 7513)).